The chain runs to 451 residues: uncharacterized protein (451 aa).

Residues 2-60 (VVKVKQKIPLKIKRMGINGEGIGFYQKTLVFVPGALKGEDIFCQITAVKRNFAEAKLLT) enclose the TRAM domain. [4Fe-4S] cluster contacts are provided by cysteine 73, cysteine 79, cysteine 82, and cysteine 162. S-adenosyl-L-methionine-binding residues include glutamine 283, tyrosine 312, aspartate 333, and aspartate 381. The active-site Nucleophile is cysteine 408.

This sequence belongs to the class I-like SAM-binding methyltransferase superfamily. RNA M5U methyltransferase family.

This is an uncharacterized protein from Streptococcus pyogenes serotype M1.